The sequence spans 78 residues: Large ribosomal subunit protein bL28 (78 aa).

Belongs to the bacterial ribosomal protein bL28 family.

This chain is Large ribosomal subunit protein bL28, found in Marinobacter nauticus (strain ATCC 700491 / DSM 11845 / VT8) (Marinobacter aquaeolei).